The sequence spans 226 residues: PKHD-type hydroxylase mma_3620 (226 aa).

Residues 78–178 enclose the Fe2OG dioxygenase domain; it reads RYMPPLFNRY…RVCSFFWLQS (101 aa). Fe cation is bound by residues His96, Asp98, and His159. Arg169 serves as a coordination point for 2-oxoglutarate.

The cofactor is Fe(2+). L-ascorbate is required as a cofactor.

The protein is PKHD-type hydroxylase mma_3620 of Janthinobacterium sp. (strain Marseille) (Minibacterium massiliensis).